Consider the following 439-residue polypeptide: tRNA modification GTPase MnmE (439 aa).

(6S)-5-formyl-5,6,7,8-tetrahydrofolate contacts are provided by Arg23, Glu80, and Lys120. In terms of domain architecture, TrmE-type G spans 217 to 365 (GLKIVIAGEP…LLTALQSHLP (149 aa)). Asn227 lines the K(+) pocket. GTP-binding positions include 227–232 (NAGKSS), 246–252 (TEVAGTT), and 271–274 (DTAG). Residue Ser231 participates in Mg(2+) binding. K(+)-binding residues include Thr246, Val248, and Thr251. Thr252 provides a ligand contact to Mg(2+). Residue Lys439 coordinates (6S)-5-formyl-5,6,7,8-tetrahydrofolate.

It belongs to the TRAFAC class TrmE-Era-EngA-EngB-Septin-like GTPase superfamily. TrmE GTPase family. Homodimer. Heterotetramer of two MnmE and two MnmG subunits. K(+) is required as a cofactor.

Its subcellular location is the cytoplasm. Exhibits a very high intrinsic GTPase hydrolysis rate. Involved in the addition of a carboxymethylaminomethyl (cmnm) group at the wobble position (U34) of certain tRNAs, forming tRNA-cmnm(5)s(2)U34. The protein is tRNA modification GTPase MnmE of Rhizobium meliloti (strain 1021) (Ensifer meliloti).